The sequence spans 262 residues: Shikimate dehydrogenase (NADP(+)) (262 aa).

Shikimate contacts are provided by residues 15–17 (SRS) and threonine 62. Residue lysine 66 is the Proton acceptor of the active site. An NADP(+)-binding site is contributed by glutamate 78. The shikimate site is built by asparagine 87 and aspartate 102. Residues 126–130 (GAGGA), 150–155 (NRTLAR), and methionine 214 contribute to the NADP(+) site. A shikimate-binding site is contributed by tyrosine 216. Glycine 236 serves as a coordination point for NADP(+).

Belongs to the shikimate dehydrogenase family. As to quaternary structure, homodimer.

It catalyses the reaction shikimate + NADP(+) = 3-dehydroshikimate + NADPH + H(+). It participates in metabolic intermediate biosynthesis; chorismate biosynthesis; chorismate from D-erythrose 4-phosphate and phosphoenolpyruvate: step 4/7. Its function is as follows. Involved in the biosynthesis of the chorismate, which leads to the biosynthesis of aromatic amino acids. Catalyzes the reversible NADPH linked reduction of 3-dehydroshikimate (DHSA) to yield shikimate (SA). The chain is Shikimate dehydrogenase (NADP(+)) from Acinetobacter baumannii (strain SDF).